Here is a 475-residue protein sequence, read N- to C-terminus: UDP-N-acetylmuramoylalanine--D-glutamate ligase (475 aa).

Residue 130 to 136 (GTNGKTT) coordinates ATP.

This sequence belongs to the MurCDEF family.

Its subcellular location is the cytoplasm. The enzyme catalyses UDP-N-acetyl-alpha-D-muramoyl-L-alanine + D-glutamate + ATP = UDP-N-acetyl-alpha-D-muramoyl-L-alanyl-D-glutamate + ADP + phosphate + H(+). The protein operates within cell wall biogenesis; peptidoglycan biosynthesis. Functionally, cell wall formation. Catalyzes the addition of glutamate to the nucleotide precursor UDP-N-acetylmuramoyl-L-alanine (UMA). This chain is UDP-N-acetylmuramoylalanine--D-glutamate ligase, found in Corynebacterium efficiens (strain DSM 44549 / YS-314 / AJ 12310 / JCM 11189 / NBRC 100395).